We begin with the raw amino-acid sequence, 363 residues long: MENQYKVELHNVTKEYDLYRSNNDKLKHFFNIGNVDVPRFWSLKGVSLNVKPGEALGIIGINGSGKSTISNIISGIIPQTTGTVDVHGDTSIISIGAGLKWNLTGDENIRLKGLMQGLSIKEIQAVRDDIVDFADIGDFIGQPVKDYSTGMRSRLGFAIAVHINPDIMIIDEALSVGDDTFYQKCVDKIMEFKKQGKTIIFVSHNLRQVELLCDRVAWMHFGDLLEVGETKETVDHYRKFSKDFKAQTAAYRKKYQVGKKKEQADFDIVAYERQLVEEKAKDSDKSKQAVSRQVHRTLYKQILPEKMTIATKLVMLVAIVLFVFFALVNVSGHSVTSAIENPTVLLHPVNHYIKSQSVLFNSK.

Positions 27–246 (KHFFNIGNVD…YRKFSKDFKA (220 aa)) constitute an ABC transporter domain. 60-67 (GINGSGKS) lines the ATP pocket. The interval 247-363 (QTAAYRKKYQ…KSQSVLFNSK (117 aa)) is unknown.

This sequence belongs to the ABC transporter superfamily. Teichoic acids exporter (TC 3.A.1.104.1) family. As to quaternary structure, the complex is composed of two ATP-binding proteins (TagH) and two transmembrane proteins (TagG).

It is found in the cell membrane. It catalyses the reaction ATP + H2O + teichoic acidSide 1 = ADP + phosphate + teichoic acidSide 2.. Part of the ABC transporter complex TagGH involved in teichoic acids export. Responsible for energy coupling to the transport system. This Lactiplantibacillus plantarum (strain ATCC BAA-793 / NCIMB 8826 / WCFS1) (Lactobacillus plantarum) protein is Teichoic acids export ATP-binding protein TagH.